Consider the following 626-residue polypeptide: Trehalase (626 aa).

2 helical membrane-spanning segments follow: residues Lys-20 to Leu-40 and Ser-45 to Ser-65. Residues Arg-224, Asp-232, Asn-268, Arg-277, Gln-279, Arg-344, and Glu-346 each contribute to the alpha,alpha-trehalose site. Active-site proton donor/acceptor residues include Asp-380 and Glu-580. Glu-580 and Glu-595 together coordinate alpha,alpha-trehalose.

Belongs to the glycosyl hydrolase 37 family. Forms homodimers. As to expression, highly expressed in flowers. Expressed at low levels in leaves and stems. Expressed in guard cells.

Its subcellular location is the cell membrane. It localises to the cytoplasm. It is found in the nucleus. The catalysed reaction is alpha,alpha-trehalose + H2O = alpha-D-glucose + beta-D-glucose. Involved in the regulation of trehalose content by hydrolyzing trehalose to glucose. May play a role in the regulation of abscisic acid-induced stomatal closure in response to drought stress. In Arabidopsis thaliana (Mouse-ear cress), this protein is Trehalase (TRE1).